The chain runs to 463 residues: NADH dehydrogenase [ubiquinone] iron-sulfur protein 2, mitochondrial (463 aa).

The N-terminal 33 residues, 1-33 (MAALRALCRLRGAAAQVLRPGAGVRLPIQPSRG), are a transit peptide targeting the mitochondrion. At lysine 62 the chain carries N6-acetyllysine. Position 118 is a symmetric dimethylarginine (arginine 118). [4Fe-4S] cluster is bound by residues cysteine 326, cysteine 332, and cysteine 347.

It belongs to the complex I 49 kDa subunit family. Core subunit of respiratory chain NADH dehydrogenase (Complex I) which is composed of 45 different subunits. Component of the iron-sulfur (IP) fragment of the enzyme. Interacts with NDUFAF3. Interacts with NDUFAF7. Interacts with CERS2. Requires [4Fe-4S] cluster as cofactor. In terms of processing, dimethylation at Arg-118 by NDUFAF7 takes place after NDUFS2 assembles into the complex I, leading to stabilize the early intermediate complex.

The protein resides in the mitochondrion inner membrane. It catalyses the reaction a ubiquinone + NADH + 5 H(+)(in) = a ubiquinol + NAD(+) + 4 H(+)(out). In terms of biological role, core subunit of the mitochondrial membrane respiratory chain NADH dehydrogenase (Complex I) which catalyzes electron transfer from NADH through the respiratory chain, using ubiquinone as an electron acceptor. Essential for the catalytic activity and assembly of complex I. Redox-sensitive, critical component of the oxygen-sensing pathway in the pulmonary vasculature which plays a key role in acute pulmonary oxygen-sensing and hypoxic pulmonary vasoconstriction. Plays an important role in carotid body sensing of hypoxia. Essential for glia-like neural stem and progenitor cell proliferation, differentiation and subsequent oligodendrocyte or neuronal maturation. The protein is NADH dehydrogenase [ubiquinone] iron-sulfur protein 2, mitochondrial (NDUFS2) of Bos taurus (Bovine).